We begin with the raw amino-acid sequence, 247 residues long: RNA polymerase sigma factor FliA (247 aa).

A sigma-70 factor domain-2 region spans residues 22–94 (LIQRYAPLVK…MLDEVRKGDW (73 aa)). The short motif at 49–52 (DLMQ) is the Interaction with polymerase core subunit RpoC element. Residues 102–171 (NTRMVTDAIR…GLPEDTSLSH (70 aa)) are sigma-70 factor domain-3. The tract at residues 190–238 (AIAKLPERERLVLALYYDEELNLKEIGEVLGVSESRVSQLHSQCAARLR) is sigma-70 factor domain-4. A DNA-binding region (H-T-H motif) is located at residues 212–231 (LKEIGEVLGVSESRVSQLHS).

The protein belongs to the sigma-70 factor family. FliA subfamily.

The protein localises to the cytoplasm. Functionally, sigma factors are initiation factors that promote the attachment of RNA polymerase to specific initiation sites and are then released. This sigma factor controls the expression of flagella-related genes. Required for the flagellin gene (fliC) expression. The protein is RNA polymerase sigma factor FliA of Pseudomonas aeruginosa (strain ATCC 15692 / DSM 22644 / CIP 104116 / JCM 14847 / LMG 12228 / 1C / PRS 101 / PAO1).